A 173-amino-acid polypeptide reads, in one-letter code: Putative phosphoesterase GWCH70_0799 (173 aa).

His34 (proton donor) is an active-site residue. 2 short sequence motifs (HXTX) span residues 34 to 37 and 115 to 118; these read HLTL and HITI. The active-site Proton acceptor is His115.

The protein belongs to the 2H phosphoesterase superfamily. YjcG family.

This Geobacillus sp. (strain WCH70) protein is Putative phosphoesterase GWCH70_0799.